Consider the following 97-residue polypeptide: Sorbitol dehydrogenase (97 aa).

Cys-44 serves as a coordination point for Zn(2+). Residue Tyr-50 coordinates substrate. Positions 69 and 70 each coordinate Zn(2+).

Belongs to the zinc-containing alcohol dehydrogenase family. In terms of assembly, homotetramer. The cofactor is Zn(2+).

It is found in the mitochondrion membrane. The protein resides in the cell projection. Its subcellular location is the cilium. It localises to the flagellum. The enzyme catalyses xylitol + NAD(+) = D-xylulose + NADH + H(+). It catalyses the reaction L-iditol + NAD(+) = keto-L-sorbose + NADH + H(+). The catalysed reaction is keto-D-fructose + NADH + H(+) = D-sorbitol + NAD(+). Its function is as follows. Polyol dehydrogenase that catalyzes the reversible NAD(+)-dependent oxidation of various sugar alcohols. Is active with xylitol, L-iditol and D-sorbitol (D-glucitol) as substrates, leading to the C2-oxidized products D-xylulose, L-sorbose and D-fructose, respectively. Is a key enzyme in the polyol pathway that interconverts glucose and fructose via sorbitol, which constitutes an important alternate route for glucose metabolism. May play a role in sperm motility by using sorbitol as an alternative energy source for sperm motility. This is Sorbitol dehydrogenase (SORD) from Sus scrofa (Pig).